We begin with the raw amino-acid sequence, 396 residues long: MALRPNDVTLRLTPPLAAAARRNRRAAAGGVRVYAVASGAVSTKVENKKPFAPPREVHVQVTHSMPPQKIEIFKSLDDWARDNILSHLKPVEKCWQPQDFLPDPASDGFHDEVKELRERAKEIPDDYFVCLVGDMITEEALPTYQTMLNTLDGVRDETGASPTAWAVWTRAWTAEENRHGDLLNKYLYLTGRVDMRQIEKTIQYLIGSGMDPRTENNPYLGFIYTSFQERATFISHGNTARHAKDFGDLKLAQICGIIASDEKRHETAYTKIVEKLFEIDPDGTVLAFADMMKKKISMPAHLMFDGEDDKLFEHFSMVAQRLGVYTAKDYADILEFLVSRWKISDLTGLSSEGNKAQDYLCTLAARIRRLDERAQSRAKKAGTLPFSWVYGREVQL.

The transit peptide at 1 to 32 directs the protein to the chloroplast; sequence MALRPNDVTLRLTPPLAAAARRNRRAAAGGVR. Residues E138, E176, H179, E229, E262, and H265 each coordinate Fe cation.

The protein belongs to the fatty acid desaturase type 2 family. As to quaternary structure, homodimer. Fe(2+) is required as a cofactor.

The protein localises to the plastid. The protein resides in the chloroplast. It carries out the reaction octadecanoyl-[ACP] + 2 reduced [2Fe-2S]-[ferredoxin] + O2 + 2 H(+) = (9Z)-octadecenoyl-[ACP] + 2 oxidized [2Fe-2S]-[ferredoxin] + 2 H2O. It functions in the pathway lipid metabolism; fatty acid metabolism. Functionally, converts stearoyl-ACP to oleoyl-ACP by introduction of a cis double bond between carbons 9 and 10 of the acyl chain. Required for the repression of the salicylic acid (SA) signaling pathway. This Oryza sativa subsp. indica (Rice) protein is Stearoyl-[acyl-carrier-protein] 9-desaturase 2, chloroplastic (SSI2).